Here is a 175-residue protein sequence, read N- to C-terminus: Large ribosomal subunit protein uL10 (175 aa).

The protein belongs to the universal ribosomal protein uL10 family. In terms of assembly, part of the ribosomal stalk of the 50S ribosomal subunit. The N-terminus interacts with L11 and the large rRNA to form the base of the stalk. The C-terminus forms an elongated spine to which L12 dimers bind in a sequential fashion forming a multimeric L10(L12)X complex.

Functionally, forms part of the ribosomal stalk, playing a central role in the interaction of the ribosome with GTP-bound translation factors. In Prochlorococcus marinus (strain MIT 9313), this protein is Large ribosomal subunit protein uL10.